The chain runs to 469 residues: Adenosylhomocysteinase (469 aa).

Residues Thr63, Asp139, and Glu164 each contribute to the substrate site. Residue 165–167 (TTT) coordinates NAD(+). Positions 194 and 198 each coordinate substrate. NAD(+) is bound by residues Asn199, 228–233 (GYGDVG), Glu251, Asn300, 321–323 (IGH), and Asn375.

It belongs to the adenosylhomocysteinase family. NAD(+) serves as cofactor.

The protein resides in the cytoplasm. The enzyme catalyses S-adenosyl-L-homocysteine + H2O = L-homocysteine + adenosine. It participates in amino-acid biosynthesis; L-homocysteine biosynthesis; L-homocysteine from S-adenosyl-L-homocysteine: step 1/1. May play a key role in the regulation of the intracellular concentration of adenosylhomocysteine. The sequence is that of Adenosylhomocysteinase from Pseudomonas fluorescens (strain SBW25).